Here is a 911-residue protein sequence, read N- to C-terminus: Valine--tRNA ligase (911 aa).

The 'HIGH' region signature appears at 53–63 (PNVTGTLHLGH). The short motif at 533–537 (KMSKS) is the 'KMSKS' region element. ATP is bound at residue Lys536. Residues 845–910 (KEIERLTKEL…NRLAMLRSMQ (66 aa)) are a coiled coil.

Belongs to the class-I aminoacyl-tRNA synthetase family. ValS type 1 subfamily. In terms of assembly, monomer.

Its subcellular location is the cytoplasm. It catalyses the reaction tRNA(Val) + L-valine + ATP = L-valyl-tRNA(Val) + AMP + diphosphate. Functionally, catalyzes the attachment of valine to tRNA(Val). As ValRS can inadvertently accommodate and process structurally similar amino acids such as threonine, to avoid such errors, it has a 'posttransfer' editing activity that hydrolyzes mischarged Thr-tRNA(Val) in a tRNA-dependent manner. In Symbiobacterium thermophilum (strain DSM 24528 / JCM 14929 / IAM 14863 / T), this protein is Valine--tRNA ligase.